We begin with the raw amino-acid sequence, 329 residues long: Probable endo-beta-1,4-glucanase B (329 aa).

The signal sequence occupies residues 1-18; that stretch reads MKFGSIVLIAAAAGSAVA. 2 N-linked (GlcNAc...) asparagine glycosylation sites follow: asparagine 33 and asparagine 96. The active-site Proton donor is the glutamate 156. Catalysis depends on glutamate 263, which acts as the Nucleophile.

Belongs to the glycosyl hydrolase 5 (cellulase A) family.

The protein localises to the secreted. The enzyme catalyses Endohydrolysis of (1-&gt;4)-beta-D-glucosidic linkages in cellulose, lichenin and cereal beta-D-glucans.. Has endoglucanase activity on substrates containing beta-1,4 glycosidic bonds, like in carboxymethylcellulose (CMC), hydroxyethylcellulose (HEC) and beta-glucan. Involved in the degradation of complex natural cellulosic substrates. In Neosartorya fischeri (strain ATCC 1020 / DSM 3700 / CBS 544.65 / FGSC A1164 / JCM 1740 / NRRL 181 / WB 181) (Aspergillus fischerianus), this protein is Probable endo-beta-1,4-glucanase B (eglB).